Reading from the N-terminus, the 132-residue chain is UPF0299 membrane protein YohJ (132 aa).

Transmembrane regions (helical) follow at residues 5–25, 26–46, 63–83, and 93–113; these read LNII…LYAG, IFIA…MLIL, GCYV…VGVM, and FGPV…VVSW.

Belongs to the UPF0299 family.

It localises to the cell inner membrane. The chain is UPF0299 membrane protein YohJ from Shigella flexneri serotype 5b (strain 8401).